The chain runs to 691 residues: Elongation factor G 2 (691 aa).

Residues 8–287 (DRYRNIGIMA…AVVDYLPSPL (280 aa)) form the tr-type G domain. Residues 17 to 24 (AHIDAGKT), 85 to 89 (DTPGH), and 139 to 142 (NKMD) each bind GTP.

It belongs to the TRAFAC class translation factor GTPase superfamily. Classic translation factor GTPase family. EF-G/EF-2 subfamily.

Its subcellular location is the cytoplasm. In terms of biological role, catalyzes the GTP-dependent ribosomal translocation step during translation elongation. During this step, the ribosome changes from the pre-translocational (PRE) to the post-translocational (POST) state as the newly formed A-site-bound peptidyl-tRNA and P-site-bound deacylated tRNA move to the P and E sites, respectively. Catalyzes the coordinated movement of the two tRNA molecules, the mRNA and conformational changes in the ribosome. The sequence is that of Elongation factor G 2 from Myxococcus xanthus (strain DK1622).